A 616-amino-acid chain; its full sequence is Chaperone protein HscA homolog (616 aa).

It belongs to the heat shock protein 70 family.

Its function is as follows. Chaperone involved in the maturation of iron-sulfur cluster-containing proteins. Has a low intrinsic ATPase activity which is markedly stimulated by HscB. In Aliivibrio fischeri (strain ATCC 700601 / ES114) (Vibrio fischeri), this protein is Chaperone protein HscA homolog.